The primary structure comprises 658 residues: Threonine--tRNA ligase (658 aa).

The TGS domain maps to 1–64 (MSNTVSLQFP…GASGKVEIIT (64 aa)). The segment at 246–548 (DHRRLGREMD…LIENFAGHMP (303 aa)) is catalytic. The Zn(2+) site is built by Cys343, His394, and His525.

It belongs to the class-II aminoacyl-tRNA synthetase family. As to quaternary structure, homodimer. Zn(2+) serves as cofactor.

Its subcellular location is the cytoplasm. The catalysed reaction is tRNA(Thr) + L-threonine + ATP = L-threonyl-tRNA(Thr) + AMP + diphosphate + H(+). Catalyzes the attachment of threonine to tRNA(Thr) in a two-step reaction: L-threonine is first activated by ATP to form Thr-AMP and then transferred to the acceptor end of tRNA(Thr). Also edits incorrectly charged L-seryl-tRNA(Thr). The polypeptide is Threonine--tRNA ligase (Brucella melitensis biotype 2 (strain ATCC 23457)).